The chain runs to 779 residues: Transcriptional regulator QRICH1 (779 aa).

N-acetylmethionine is present on Met1. The CARD domain occupies 6-48 (ENTISFEEYIRVKARSVPQHRMKEFLDSLASKGPEALQEFQQT). Disordered regions lie at residues 141–163 (QGQAAQPAAPSIQTPSLQSPSPS) and 219–242 (ALSPPPSQQGSPREGERRVGTASV). Ser346 is modified (phosphoserine). Glycyl lysine isopeptide (Lys-Gly) (interchain with G-Cter in SUMO2) cross-links involve residues Lys354 and Lys359. The span at 420–430 (QQQPQQQTPQE) shows a compositional bias: low complexity. Residues 420–443 (QQQPQQQTPQEQTPPPPQQQQQQQ) are disordered. Ser467 is modified (phosphoserine).

Its subcellular location is the nucleus. It localises to the cytoplasm. The protein localises to the cell membrane. Transcriptional regulator that acts as a mediator of the integrated stress response (ISR) through transcriptional control of protein homeostasis under conditions of ER stress. Controls the outcome of the unfolded protein response (UPR), an ER-stress response pathway that either promotes recovery of ER homeostasis and cell survival, or triggers the terminal UPR which elicits programmed cell death when ER stress is prolonged and unresolved. ER stress induces QRICH1 translation by a ribosome translation re-initiation mechanism in response to EIF2S1/eIF-2-alpha phosphorylation, and stress-induced QRICH1 regulates a transcriptional program associated with protein translation, protein secretion-mediated proteotoxicity and cell death during the terminal UPR. May cooperate with ATF4 transcription factor signaling to regulate ER homeostasis which is critical for cell viability. Up-regulates CASP3/caspase-3 activity in epithelial cells under ER stress. Central regulator of proteotoxicity associated with ER stress-mediated inflammatory diseases in the intestines and liver. Involved in chondrocyte hypertrophy, a process required for normal longitudinal bone growth. This is Transcriptional regulator QRICH1 (QRICH1) from Bos taurus (Bovine).